The chain runs to 194 residues: Holliday junction branch migration complex subunit RuvA (194 aa).

The segment at 1 to 64 (MIGRLRGILA…EDSVALYGFL (64 aa)) is domain I. The tract at residues 65–140 (REGERRLFRD…RAADFSSGAP (76 aa)) is domain II. Residues 140 to 144 (PITGQ) form a flexible linker region. A domain III region spans residues 145–194 (LGPDAVSEATVALQQLGYKPAEAARMARDAGAEGDEVATVIRKALQAALR).

Belongs to the RuvA family. Homotetramer. Forms an RuvA(8)-RuvB(12)-Holliday junction (HJ) complex. HJ DNA is sandwiched between 2 RuvA tetramers; dsDNA enters through RuvA and exits via RuvB. An RuvB hexamer assembles on each DNA strand where it exits the tetramer. Each RuvB hexamer is contacted by two RuvA subunits (via domain III) on 2 adjacent RuvB subunits; this complex drives branch migration. In the full resolvosome a probable DNA-RuvA(4)-RuvB(12)-RuvC(2) complex forms which resolves the HJ.

It localises to the cytoplasm. Its function is as follows. The RuvA-RuvB-RuvC complex processes Holliday junction (HJ) DNA during genetic recombination and DNA repair, while the RuvA-RuvB complex plays an important role in the rescue of blocked DNA replication forks via replication fork reversal (RFR). RuvA specifically binds to HJ cruciform DNA, conferring on it an open structure. The RuvB hexamer acts as an ATP-dependent pump, pulling dsDNA into and through the RuvAB complex. HJ branch migration allows RuvC to scan DNA until it finds its consensus sequence, where it cleaves and resolves the cruciform DNA. This Xanthomonas euvesicatoria pv. vesicatoria (strain 85-10) (Xanthomonas campestris pv. vesicatoria) protein is Holliday junction branch migration complex subunit RuvA.